Reading from the N-terminus, the 58-residue chain is uncharacterized protein (58 aa).

Its subcellular location is the plastid. The protein resides in the chloroplast. This is an uncharacterized protein from Porphyra purpurea (Red seaweed).